Reading from the N-terminus, the 510-residue chain is ATP synthase subunit alpha 1 (510 aa).

Residue 167 to 174 (GDRATGKT) coordinates ATP.

The protein belongs to the ATPase alpha/beta chains family. As to quaternary structure, F-type ATPases have 2 components, CF(1) - the catalytic core - and CF(0) - the membrane proton channel. CF(1) has five subunits: alpha(3), beta(3), gamma(1), delta(1), epsilon(1). CF(0) has three main subunits: a(1), b(2) and c(9-12). The alpha and beta chains form an alternating ring which encloses part of the gamma chain. CF(1) is attached to CF(0) by a central stalk formed by the gamma and epsilon chains, while a peripheral stalk is formed by the delta and b chains.

The protein localises to the cell inner membrane. The enzyme catalyses ATP + H2O + 4 H(+)(in) = ADP + phosphate + 5 H(+)(out). In terms of biological role, produces ATP from ADP in the presence of a proton gradient across the membrane. The alpha chain is a regulatory subunit. The protein is ATP synthase subunit alpha 1 of Paraburkholderia xenovorans (strain LB400).